Here is a 374-residue protein sequence, read N- to C-terminus: All-trans-retinol dehydrogenase [NAD(+)] ADH7 (374 aa).

At Met-1 the chain carries N-acetylmethionine. The Zn(2+) site is built by Cys-47, His-68, Cys-98, Cys-101, Cys-104, Cys-112, and Cys-174. Residues 199 to 204 (GLGGVG), Asp-223, Lys-228, 292 to 294 (VGA), and Arg-369 contribute to the NAD(+) site.

The protein belongs to the zinc-containing alcohol dehydrogenase family. Class-IV subfamily. As to quaternary structure, homodimer. It depends on Zn(2+) as a cofactor. As to expression, preferentially expressed in stomach.

It is found in the cytoplasm. It carries out the reaction a primary alcohol + NAD(+) = an aldehyde + NADH + H(+). The enzyme catalyses 10-hydroxydecanoate + NAD(+) = 10-oxodecanoate + NADH + H(+). The catalysed reaction is all-trans-retinol + NAD(+) = all-trans-retinal + NADH + H(+). It catalyses the reaction 9-cis-retinol + NAD(+) = 9-cis-retinal + NADH + H(+). It carries out the reaction all-trans-3,4-didehydroretinol + NAD(+) = all-trans-3,4-didehydroretinal + NADH + H(+). The enzyme catalyses all-trans-4-hydroxyretinol + NAD(+) = all-trans-4-hydroxyretinal + NADH + H(+). The catalysed reaction is all-trans-4-oxoretinol + NAD(+) = all-trans-4-oxoretinal + NADH + H(+). It catalyses the reaction 12-hydroxydodecanoate + NAD(+) = 12-oxododecanoate + NADH + H(+). It carries out the reaction 16-hydroxyhexadecanoate + NAD(+) = 16-oxohexadecanoate + NADH + H(+). The enzyme catalyses hexan-1-ol + NAD(+) = hexanal + NADH + H(+). The catalysed reaction is (E)-hex-2-en-1-ol + NAD(+) = (E)-hex-2-enal + NADH + H(+). It catalyses the reaction (E)-4-hydroxynon-2-en-1-ol + NAD(+) = (E)-4-hydroxynon-2-enal + NADH + H(+). Retinol oxidation is inhibited by the detergent Tween 80. Ethanol inhibits both all-trans-retinol and 9-cis-retinol oxidation. 13-cis-retinol is an effective competitive inhibitor of the 9-cis-retinol oxidation. All-trans-retinoic acid is a powerful inhibitor of all-trans-retinol oxidation. 13-cis-retinoic acid is a powerful inhibitor of all-trans-retinol oxidation. Cimetidine and ranitidine inhibited ethanol oxidation. In terms of biological role, catalyzes the NAD-dependent oxidation of all-trans-retinol, alcohol, aldehyde and omega-hydroxy fatty acids and their derivatives. Oxidizes preferentially all trans-retinol, all-trans-4-hydroxyretinol, 9-cis-retinol, 2-hexenol, and long chain omega-hydroxy fatty acids such as juniperic acid. In vitro can also catalyze the NADH-dependent reduction of all-trans-retinal and aldehydes and their derivatives. Reduces preferentially all trans-retinal, all-trans-4-oxoretinal and hexanal. Catalyzes in the oxidative direction with higher efficiency. Therefore may participate in retinoid metabolism, fatty acid omega-oxidation, and elimination of cytotoxic aldehydes produced by lipid peroxidation. In Rattus norvegicus (Rat), this protein is All-trans-retinol dehydrogenase [NAD(+)] ADH7 (Adh7).